The primary structure comprises 667 residues: Beta-galactosidase LacZ (667 aa).

R109 is a substrate binding site. Position 113 (C113) interacts with Zn(2+). Position 147 (N147) interacts with substrate. E148 (proton donor) is an active-site residue. The Zn(2+) site is built by C153, C155, and C158. Residue E307 is the Nucleophile of the active site. Substrate is bound by residues W315 and 355–358 (EKFH).

The protein belongs to the glycosyl hydrolase 42 family.

The catalysed reaction is Hydrolysis of terminal non-reducing beta-D-galactose residues in beta-D-galactosides.. Catalyzes the hydrolysis of lactose to its constituent monosaccharides glucose and galactose. The protein is Beta-galactosidase LacZ of Lactobacillus acidophilus (strain ATCC 700396 / NCK56 / N2 / NCFM).